We begin with the raw amino-acid sequence, 1026 residues long: Unconventional myosin-Ic (1026 aa).

The residue at position 1 (M1) is an N-acetylmethionine. The 684-residue stretch at 12-695 (GVQDFLLLEN…TLFITEDALE (684 aa)) folds into the Myosin motor domain. ATP is bound by residues N53, Y61, 104 to 113 (SGESGAGKTE), and 157 to 161 (NDNSS). An N6-methyllysine modification is found at K349. An actin-binding region spans residues 572–594 (LAKLMDILMSKEPSYVRCIKPND). 2 consecutive IQ domains span residues 698 to 727 (KQTIAVTLQKSWRGYRERANYHRIRHAVIV) and 721 to 750 (IRHAVIVIQSWWRGVKGRRKAKHRRQAADT). The TH1 domain maps to 849-1024 (KDGYSRSVPK…NGHLSVTTPR (176 aa)).

Belongs to the TRAFAC class myosin-kinesin ATPase superfamily. Myosin family. Interacts (via its IQ motifs) with calm.

The protein resides in the cytoplasm. The protein localises to the cell cortex. It localises to the cell projection. It is found in the ruffle membrane. Its subcellular location is the cytoplasmic vesicle. The protein resides in the stereocilium membrane. In terms of biological role, myosins are actin-based motor molecules with ATPase activity. Unconventional myosins serve in intracellular movements. Their highly divergent tails are presumed to bind to membranous compartments, which would be moved relative to actin filaments. This chain is Unconventional myosin-Ic (myo1c), found in Danio rerio (Zebrafish).